The primary structure comprises 1997 residues: Protein MOR1 (1997 aa).

HEAT repeat units follow at residues 48-86 and 164-202; these read DARL…AADA and VVPP…WIGK. Positions 236–264 are disordered; that stretch reads RKIRSEQEKELEEEVVPEAAGTNNSEEAV. 3 HEAT repeats span residues 321–359, 362–400, and 441–479; these read PGDF…GLRT, SGNS…SGCI, and LKLH…MVGM. The disordered stretch occupies residues 501–576; that stretch reads IGSASDTTSG…DGGPQSKASA (76 aa). A compositionally biased stretch (polar residues) spans 504–520; that stretch reads ASDTTSGTVAASNTGVG. Positions 529-539 are enriched in low complexity; the sequence is SSSMRRSAASM. 4 HEAT repeats span residues 848 to 886, 890 to 928, 931 to 969, and 1007 to 1045; these read EDIS…EAHK, PTGT…AMGP, EKSS…AAQL, and PSEA…ICGQ. Residues 1087 to 1115 are disordered; that stretch reads MSLPSKAGSKNNKHGPNDRGSNVSKAVSQ. HEAT repeat units lie at residues 1233-1259, 1260-1294, 1295-1332, and 1334-1372; these read TTCL…MLTE, AEAA…MVNI, YSLP…HHGT, and VSGL…NLGD. Residues 1400-1410 show a composition bias toward basic and acidic residues; sequence MDKRREGRPGD. The tract at residues 1400–1436 is disordered; it reads MDKRREGRPGDARAALRRSVRENGSDIAEQSGEAVSR. An HEAT 14 repeat occupies 1539–1579; that stretch reads RSCKYVLNTLMQTFQIKRLAHAVKEGTLDNLITELLLWLLD. The interval 1755–1776 is disordered; that stretch reads MGQTHWGDAGSNNPNPSTHSTD. Residues 1764 to 1776 show a composition bias toward polar residues; it reads GSNNPNPSTHSTD.

It belongs to the TOG/XMAP215 family.

The protein resides in the cytoplasm. The protein localises to the cytoskeleton. In terms of biological role, microtubule-associated protein that is essential for cortical microtubules organization and function. This chain is Protein MOR1 (MOR1), found in Oryza sativa subsp. japonica (Rice).